The primary structure comprises 46 residues: Cysteine-rich venom protein asurin-1 (46 aa).

It belongs to the CRISP family. Contains 8 disulfide bonds. In terms of tissue distribution, expressed by the venom gland.

The protein localises to the secreted. Functionally, blocks contraction of smooth muscle elicited by high potassium-induced depolarization, but does not block caffeine-stimulated contraction. May target voltage-gated calcium channels on smooth muscle. The chain is Cysteine-rich venom protein asurin-1 from Austrelaps superbus (Lowland copperhead snake).